Consider the following 148-residue polypeptide: Probable glycine cleavage system H protein 2 (148 aa).

The Lipoyl-binding domain maps to V32–K114. K73 carries the post-translational modification N6-lipoyllysine.

The protein belongs to the GcvH family. As to quaternary structure, the glycine cleavage system is composed of four proteins: P, T, L and H. The cofactor is (R)-lipoate.

The glycine cleavage system catalyzes the degradation of glycine. The H protein shuttles the methylamine group of glycine from the P protein to the T protein. The sequence is that of Probable glycine cleavage system H protein 2 from Sulfurisphaera tokodaii (strain DSM 16993 / JCM 10545 / NBRC 100140 / 7) (Sulfolobus tokodaii).